Here is a 270-residue protein sequence, read N- to C-terminus: Regulatory protein RecX (270 aa).

This sequence belongs to the RecX family.

It localises to the cytoplasm. In terms of biological role, modulates RecA activity. The polypeptide is Regulatory protein RecX (Bacillus cereus (strain B4264)).